A 467-amino-acid chain; its full sequence is ATP synthase subunit beta (467 aa).

Position 150 to 157 (150 to 157 (GGAGVGKT)) interacts with ATP.

Belongs to the ATPase alpha/beta chains family. F-type ATPases have 2 components, CF(1) - the catalytic core - and CF(0) - the membrane proton channel. CF(1) has five subunits: alpha(3), beta(3), gamma(1), delta(1), epsilon(1). CF(0) has three main subunits: a(1), b(2) and c(9-12). The alpha and beta chains form an alternating ring which encloses part of the gamma chain. CF(1) is attached to CF(0) by a central stalk formed by the gamma and epsilon chains, while a peripheral stalk is formed by the delta and b chains.

The protein resides in the cell inner membrane. It carries out the reaction ATP + H2O + 4 H(+)(in) = ADP + phosphate + 5 H(+)(out). Functionally, produces ATP from ADP in the presence of a proton gradient across the membrane. The catalytic sites are hosted primarily by the beta subunits. The sequence is that of ATP synthase subunit beta from Aliivibrio fischeri (strain ATCC 700601 / ES114) (Vibrio fischeri).